The chain runs to 442 residues: Protein cereblon (442 aa).

Residues 1-45 (MAGEGDQQDAAHNMGNHLPLLPAESEEEDEMEVEDQDSKEAKKPN) form a disordered region. A compositionally biased stretch (acidic residues) spans 24–35 (ESEEEDEMEVED). Ser-25 is subject to Phosphoserine. One can recognise a Lon N-terminal domain in the interval 81–319 (IPVLPQVMMI…CELDIMNKCT (239 aa)). Residues 318–426 (CTSLCCKQCQ…LTRSALLPTI (109 aa)) form the CULT domain. The Zn(2+) site is built by Cys-323 and Cys-326. Residues His-378, Trp-380, and Trp-386 each contribute to the (S)-thalidomide site. Zn(2+)-binding residues include Cys-391 and Cys-394.

The protein belongs to the CRBN family. As to quaternary structure, interacts with KCNT1. Component of a DCX (DDB1-CUL4-X-box) protein ligase complex, at least composed of CRBN, CUL4A, DDB1 and RBX1. Interacts directly with DDB1. Interacts (in pomalidomide-bound form) with IKZF1 and IKZF3. Interacts with ILF2. Interacts with TRAF6 and ECSIT. Post-translationally, ubiquitinated, ubiquitination is mediated by its own DCX protein ligase complex. In terms of tissue distribution, widely expressed. Highly expressed in brain.

The protein localises to the cytoplasm. It is found in the nucleus. It localises to the membrane. The protein operates within protein modification; protein ubiquitination. Its function is as follows. Substrate recognition component of a DCX (DDB1-CUL4-X-box) E3 protein ligase complex that mediates the ubiquitination and subsequent proteasomal degradation of target proteins, such as MEIS2, ILF2 or GLUL. Normal degradation of key regulatory proteins is required for normal limb outgrowth and expression of the fibroblast growth factor FGF8. Maintains presynaptic glutamate release and consequently cognitive functions, such as memory and learning, by negatively regulating large-conductance calcium-activated potassium (BK) channels in excitatory neurons. Likely to function by regulating the assembly and neuronal surface expression of BK channels via its interaction with KCNT1. May also be involved in regulating anxiety-like behaviors via a BK channel-independent mechanism. Plays a negative role in TLR4 signaling by interacting with TRAF6 and ECSIT, leading to inhibition of ECSIT ubiquitination, an important step of the signaling. The protein is Protein cereblon (CRBN) of Homo sapiens (Human).